Here is a 469-residue protein sequence, read N- to C-terminus: Neuraminidase (469 aa).

Topologically, residues 1 to 9 (MNPNQKIIT) are intravirion. A helical membrane pass occupies residues 10–30 (IGSVSLTIATVCFLMQIAILV). Residues 11–33 (GSVSLTIATVCFLMQIAILVTTV) form an involved in apical transport and lipid raft association region. The Virion surface portion of the chain corresponds to 31-469 (TTVTLHFKQY…DGADINLMPI (439 aa)). The tract at residues 36–88 (HFKQYECDSPANNQVMPCEPIIIERNITEIVYLTNTTIEKEICPKLVEYRNWS) is hypervariable stalk region. Residues N61, N70, and N86 are each glycosylated (N-linked (GlcNAc...) asparagine; by host). A head of neuraminidase region spans residues 91–469 (QCKITGFAPF…DGADINLMPI (379 aa)). 8 disulfide bridges follow: C92–C417, C124–C129, C183–C230, C232–C237, C278–C291, C280–C289, C318–C337, and C421–C447. Residue R118 coordinates substrate. Residue N146 is glycosylated (N-linked (GlcNAc...) asparagine; by host). Residue D151 is the Proton donor/acceptor of the active site. Substrate is bound at residue R152. Residues N200 and N234 are each glycosylated (N-linked (GlcNAc...) asparagine; by host). Residue 276–277 (EE) participates in substrate binding. Position 292 (R292) interacts with substrate. Positions 293, 297, and 324 each coordinate Ca(2+). Residues 326 to 350 (PRNNDRSSNSNCRNPNNDKGNHGVK) form a disordered region. Residues 331–343 (RSSNSNCRNPNND) show a composition bias toward low complexity. R371 provides a ligand contact to substrate. N402 carries an N-linked (GlcNAc...) asparagine; by host glycan. Residue Y406 is the Nucleophile of the active site.

Belongs to the glycosyl hydrolase 34 family. In terms of assembly, homotetramer. Ca(2+) serves as cofactor. N-glycosylated.

The protein localises to the virion membrane. It is found in the host apical cell membrane. The catalysed reaction is Hydrolysis of alpha-(2-&gt;3)-, alpha-(2-&gt;6)-, alpha-(2-&gt;8)- glycosidic linkages of terminal sialic acid residues in oligosaccharides, glycoproteins, glycolipids, colominic acid and synthetic substrates.. Inhibited by the neuraminidase inhibitors zanamivir (Relenza) and oseltamivir (Tamiflu). These drugs interfere with the release of progeny virus from infected cells and are effective against all influenza strains. Resistance to neuraminidase inhibitors is quite rare. Catalyzes the removal of terminal sialic acid residues from viral and cellular glycoconjugates. Cleaves off the terminal sialic acids on the glycosylated HA during virus budding to facilitate virus release. Additionally helps virus spread through the circulation by further removing sialic acids from the cell surface. These cleavages prevent self-aggregation and ensure the efficient spread of the progeny virus from cell to cell. Otherwise, infection would be limited to one round of replication. Described as a receptor-destroying enzyme because it cleaves a terminal sialic acid from the cellular receptors. May facilitate viral invasion of the upper airways by cleaving the sialic acid moieties on the mucin of the airway epithelial cells. Likely to plays a role in the budding process through its association with lipid rafts during intracellular transport. May additionally display a raft-association independent effect on budding. Plays a role in the determination of host range restriction on replication and virulence. Sialidase activity in late endosome/lysosome traffic seems to enhance virus replication. In Aves (whales), this protein is Neuraminidase.